Reading from the N-terminus, the 513-residue chain is MGAYETEKPTKDAAALETQSPEDFDQPSPLRKIISVASIAAGVQFGWALQLSLLTPYVQLLGIPHKWSSLIWLCGPVSGMIVQPIVGFHSDRCRSKFGRRRPFIATGAALVAVAVFLIGYAADFGYKMGDKLEEKVKVRAIGIFALGFWILDVANNTLQGPCRAFLADLAAGDAKRTRVANAFFSFFMAVGNVLGYAAGSYTNLHKMFPFTMTKACDIYCANLKTCFFLSITLLLIVTVTSLWYVNDKQWSPPPRNADDDEKTSSVPLFGEIFGAFKVMKRPMWMLLIVTALNWIAWFPFLLFDTDWMGREVFGGDSDGNERSKKLYSLGVQSGAMGLMFNSIVLGFMSLGVEWIGRKLGGAKRLWGIVNFILAAGLAMTVLVTKFAEDHRKTAGDLAGPSASVKAGALSLFAVLGIPLAITFSTPFALASIFSSCSGAGQGLSLGVLNLAIVIPQMIVSLGGGPFDALFGGGNLPAFIVAAIAAAISGVLALTVLPSPPPDAPKATTMGGFH.

Basic and acidic residues predominate over residues 1–11; sequence MGAYETEKPTK. The disordered stretch occupies residues 1 to 26; the sequence is MGAYETEKPTKDAAALETQSPEDFDQ. Topologically, residues 1-32 are cytoplasmic; the sequence is MGAYETEKPTKDAAALETQSPEDFDQPSPLRK. Position 20 is a phosphoserine (serine 20). A helical transmembrane segment spans residues 33 to 53; it reads IISVASIAAGVQFGWALQLSL. Over 54–67 the chain is Extracellular; the sequence is LTPYVQLLGIPHKW. The helical transmembrane segment at 68–88 threads the bilayer; it reads SSLIWLCGPVSGMIVQPIVGF. Over 89–101 the chain is Cytoplasmic; sequence HSDRCRSKFGRRR. Residues 102–122 traverse the membrane as a helical segment; sequence PFIATGAALVAVAVFLIGYAA. Over 123–139 the chain is Extracellular; that stretch reads DFGYKMGDKLEEKVKVR. Residues 140–160 form a helical membrane-spanning segment; the sequence is AIGIFALGFWILDVANNTLQG. Residues 161-178 lie on the Cytoplasmic side of the membrane; sequence PCRAFLADLAAGDAKRTR. A helical transmembrane segment spans residues 179–199; it reads VANAFFSFFMAVGNVLGYAAG. The Extracellular portion of the chain corresponds to 200-224; that stretch reads SYTNLHKMFPFTMTKACDIYCANLK. A helical transmembrane segment spans residues 225–245; the sequence is TCFFLSITLLLIVTVTSLWYV. Topologically, residues 246–282 are cytoplasmic; it reads NDKQWSPPPRNADDDEKTSSVPLFGEIFGAFKVMKRP. The chain crosses the membrane as a helical span at residues 283–303; it reads MWMLLIVTALNWIAWFPFLLF. The Extracellular segment spans residues 304-334; sequence DTDWMGREVFGGDSDGNERSKKLYSLGVQSG. Residues 335–355 form a helical membrane-spanning segment; sequence AMGLMFNSIVLGFMSLGVEWI. Over 356 to 365 the chain is Cytoplasmic; that stretch reads GRKLGGAKRL. The chain crosses the membrane as a helical span at residues 366 to 386; sequence WGIVNFILAAGLAMTVLVTKF. Residues 387–408 lie on the Extracellular side of the membrane; it reads AEDHRKTAGDLAGPSASVKAGA. Residues 409 to 429 form a helical membrane-spanning segment; it reads LSLFAVLGIPLAITFSTPFAL. Topologically, residues 430–441 are cytoplasmic; it reads ASIFSSCSGAGQ. The helical transmembrane segment at 442 to 462 threads the bilayer; it reads GLSLGVLNLAIVIPQMIVSLG. Over 463–474 the chain is Extracellular; it reads GGPFDALFGGGN. Residues 475–495 traverse the membrane as a helical segment; sequence LPAFIVAAIAAAISGVLALTV. At 496–513 the chain is on the cytoplasmic side; it reads LPSPPPDAPKATTMGGFH.

It belongs to the glycoside-pentoside-hexuronide (GPH) cation symporter transporter (TC 2.A.2.4) family. Expressed in flowers (at protein level). Highly expressed in pollen. Expressed in pollen tubes and root vascular cylinder, pericycle and endodermis.

The protein resides in the membrane. It catalyses the reaction sucrose(out) + H(+)(out) = sucrose(in) + H(+)(in). It participates in glycan biosynthesis; sucrose metabolism. Its activity is regulated as follows. Inhibited by DEPC, protonophores (e.g. dinitrophenol and carbonyl cyanide m-chlorophenyl-hydrazone (CCCP)), and SH group inhibitors (e.g. N-ethylmaleimide (NEM) and p-chloromercuriphenyl sulphonic acid (PCMPS)). In terms of biological role, responsible for the transport of sucrose into the cell, with the concomitant uptake of protons (symport system). This transport is both voltage- and energy-dependent. Can also transport other glucosides such as maltose, alpha-phenylglucoside and beta-phenylglucoside. May also transport biotin. Required for normal pollen germination and anthocyanin accumulation induced by sucrose. The polypeptide is Sucrose transport protein SUC1 (Arabidopsis thaliana (Mouse-ear cress)).